The chain runs to 87 residues: Defensin-like protein 81 (87 aa).

Residues 1-27 form the signal peptide; sequence MTIKKFLPLLLSSLMVYSLILLPIISG. Cystine bridges form between Cys33-Cys69, Cys37-Cys57, Cys43-Cys67, and Cys47-Cys68.

It belongs to the DEFL family.

It is found in the secreted. This chain is Defensin-like protein 81, found in Arabidopsis thaliana (Mouse-ear cress).